The following is a 729-amino-acid chain: Glycine--tRNA ligase (729 aa).

The transit peptide at 1-33 (MPCLLPSLLRATRAALPLLSPPRVVAASASQRL) directs the protein to the mitochondrion. A WHEP-TRS domain is found at 53 to 109 (LLAPLRLAVRQQGDFVRKLKEDKAPQVDVDRAVAELKARKRVLEAKELALQPKDDIV). The residue at position 194 (K194) is an N6-acetyllysine. E289 is a binding site for glycine. ATP contacts are provided by residues 321–323 (RNE) and 332–333 (RV). E340 provides a ligand contact to glycine. Y443 carries the post-translational modification Phosphotyrosine. Residue 447–448 (EI) participates in ATP binding. Residue K491 is modified to N6-acetyllysine. 566–568 (EPS) lines the glycine pocket. R573 contacts ATP. S690 carries the post-translational modification Phosphoserine. T726 is subject to Phosphothreonine.

The protein belongs to the class-II aminoacyl-tRNA synthetase family. In terms of assembly, homodimer.

The protein localises to the cytoplasm. The protein resides in the mitochondrion. It localises to the cell projection. Its subcellular location is the axon. It is found in the secreted. The protein localises to the extracellular exosome. It carries out the reaction tRNA(Gly) + glycine + ATP = glycyl-tRNA(Gly) + AMP + diphosphate. The enzyme catalyses 2 ATP + H(+) = P(1),P(4)-bis(5'-adenosyl) tetraphosphate + diphosphate. Catalyzes the ATP-dependent ligation of glycine to the 3'-end of its cognate tRNA, via the formation of an aminoacyl-adenylate intermediate (Gly-AMP). Also produces diadenosine tetraphosphate (Ap4A), a universal pleiotropic signaling molecule needed for cell regulation pathways, by direct condensation of 2 ATPs. Thereby, may play a special role in Ap4A homeostasis. The chain is Glycine--tRNA ligase (Gars1) from Mus musculus (Mouse).